Reading from the N-terminus, the 905-residue chain is Tight junction protein ZO-3 (905 aa).

Positions 11–93 constitute a PDZ 1 domain; the sequence is TATLYKDPRR…TANVTVKRPR (83 aa). The interval 92–167 is disordered; it reads PRRVQLPATK…GGGSEANGLD (76 aa). A phosphoserine mark is found at S111 and S128. Residues 124-133 show a composition bias toward low complexity; sequence GDSSSGSGRS. Over residues 139–155 the composition is skewed to basic residues; the sequence is RRSRAGRRGRVGSHGRR. 5 positions are modified to phosphoserine: S156, S157, S161, S195, and S311. Residues 187–264 form the PDZ 2 domain; that stretch reads SVLVKRRNSE…ELTLLVLRDS (78 aa). The interval 289–367 is disordered; that stretch reads LTSELSQAPP…QSLEDRGYSP (79 aa). A Phosphothreonine modification is found at T317. Phosphoserine occurs at positions 319, 343, and 359. Residues 368 to 434 form the PDZ 3 domain; that stretch reads DTRVVSFPKG…LTREEAVQFL (67 aa). One can recognise an SH3 domain in the interval 464–541; the sequence is GDSFYIRTHF…PNQSRAEQLA (78 aa). Positions 573–754 constitute a Guanylate kinase-like domain; sequence RRGTKKASTQ…WYQEVKAVIQ (182 aa). S584 carries the phosphoserine modification. Disordered regions lie at residues 773–818 and 850–905; these read EDLD…PQDV and TDKW…ATDL. The span at 851-877 shows a compositional bias: basic and acidic residues; the sequence is DKWETQADSHYTQDQRRQDSMRTYKHE. Residues S891 and S892 each carry the phosphoserine modification.

It belongs to the MAGUK family. Interacts with occludin OCLN, claudins and TPJ1. Interacts with PATJ. Interacts with UBN1. Interacts with FASLG. Interacts with CCND1. Post-translationally, phosphorylated. In terms of tissue distribution, is concentrated in various types of epithelium, in tissues such as the lung, liver and kidney, but not in endothelium or at cadherin-based cell-cell adhesion sites.

It is found in the cell membrane. The protein localises to the cell junction. It localises to the tight junction. The protein resides in the nucleus. In terms of biological role, tjp1, Tjp2, and Tjp3 are closely related scaffolding proteins that link tight junction (TJ) transmembrane proteins such as claudins, junctional adhesion molecules, and occludin to the actin cytoskeleton. The tight junction acts to limit movement of substances through the paracellular space and as a boundary between the compositionally distinct apical and basolateral plasma membrane domains of epithelial and endothelial cells. Binds and recruits PatJ to tight junctions where it connects and stabilizes apical and lateral components of tight junctions. Promotes cell-cycle progression through the sequestration of cyclin D1 (Ccnd1) at tight junctions during mitosis which prevents Ccnd1 degradation during M-phase and enables S-phase transition. With Tjp1 and Tjp2, participates in the junctional retention and stability of the transcription factor DbpA, but is not involved in its shuttling to the nucleus. Contrary to Tjp2, Tjp3 is dispensable for individual viability, embryonic development, epithelial differentiation, and the establishment of TJs, at least in the laboratory environment. This Mus musculus (Mouse) protein is Tight junction protein ZO-3 (Tjp3).